The following is a 118-amino-acid chain: Small ribosomal subunit protein eS10 (118 aa).

The tract at residues 91–118 is disordered; sequence RLKNAPAERPRPSRGGPRRGGYRGRARD. Positions 106–118 are enriched in basic residues; it reads GPRRGGYRGRARD.

Belongs to the eukaryotic ribosomal protein eS10 family. As to quaternary structure, component of the small ribosomal subunit. Mature ribosomes consist of a small (40S) and a large (60S) subunit. The 40S subunit contains about 32 different proteins and 1 molecule of RNA (18S). The 60S subunit contains 45 different proteins and 3 molecules of RNA (25S, 5.8S and 5S).

The protein localises to the cytoplasm. In terms of biological role, component of the ribosome, a large ribonucleoprotein complex responsible for the synthesis of proteins in the cell. The small ribosomal subunit (SSU) binds messenger RNAs (mRNAs) and translates the encoded message by selecting cognate aminoacyl-transfer RNA (tRNA) molecules. The large subunit (LSU) contains the ribosomal catalytic site termed the peptidyl transferase center (PTC), which catalyzes the formation of peptide bonds, thereby polymerizing the amino acids delivered by tRNAs into a polypeptide chain. The nascent polypeptides leave the ribosome through a tunnel in the LSU and interact with protein factors that function in enzymatic processing, targeting, and the membrane insertion of nascent chains at the exit of the ribosomal tunnel. The polypeptide is Small ribosomal subunit protein eS10 (RPS10) (Candida albicans (strain SC5314 / ATCC MYA-2876) (Yeast)).